Consider the following 634-residue polypeptide: Kelch-like protein 22 (634 aa).

Ala2 is modified (N-acetylalanine). The BTB domain maps to 50–117; that stretch reads FDVVLVVEGR…IYTSELELSL (68 aa). 6 Kelch repeats span residues 299–349, 350–399, 400–446, 448–493, 494–544, and 545–593; these read CVVG…VLNN, FVYL…VVGK, YIYA…TLQG, MYIT…ALLD, KLFV…VLDN, and RIYV…VLTL. The residue at position 463 (Thr463) is a Phosphothreonine. The residue at position 466 (Tyr466) is a Phosphotyrosine. Position 475 is a phosphothreonine (Thr475). Positions 600–634 are disordered; that stretch reads EQPRGTPNRSQADADFASEVMSVSDWEEFDNSSED. Position 605 is a phosphothreonine (Thr605). The segment covering 624–634 has biased composition (acidic residues); that stretch reads DWEEFDNSSED.

Component of the BCR(KLHL22) E3 ubiquitin ligase complex, at least composed of CUL3, KLHL22 and RBX1. Interacts with PLK1. Interacts with DEPDC5 (via DEP domain); the interaction depends on amino acid availability. Interacts with YWHAE; required for the nuclear localization of KLHL22 upon amino acid starvation.

Its subcellular location is the cytoplasm. It is found in the cytosol. It localises to the cytoskeleton. The protein localises to the microtubule organizing center. The protein resides in the centrosome. Its subcellular location is the spindle. It is found in the nucleus. It localises to the lysosome. The protein operates within protein modification; protein ubiquitination. In terms of biological role, substrate-specific adapter of a BCR (BTB-CUL3-RBX1) E3 ubiquitin ligase complex required for chromosome alignment and localization of PLK1 at kinetochores. The BCR(KLHL22) ubiquitin ligase complex mediates monoubiquitination of PLK1, leading to PLK1 dissociation from phosphoreceptor proteins and subsequent removal from kinetochores, allowing silencing of the spindle assembly checkpoint (SAC) and chromosome segregation. Monoubiquitination of PLK1 does not lead to PLK1 degradation. The BCR(KLHL22) ubiquitin ligase complex is also responsible for the amino acid-stimulated 'Lys-48' polyubiquitination and proteasomal degradation of DEPDC5. Through the degradation of DEPDC5, releases the GATOR1 complex-mediated inhibition of the TORC1 pathway. It is therefore an amino acid-dependent activator within the amino acid-sensing branch of the TORC1 pathway, indirectly regulating different cellular processes including cell growth and autophagy. This Rattus norvegicus (Rat) protein is Kelch-like protein 22.